Reading from the N-terminus, the 539-residue chain is Lysosomal cobalamin transport escort protein LMBD1 (539 aa).

The Extracellular segment spans residues 1–7 (MATGSTE). Residues 8–28 (LLIGWCIFGVLLLAILAFCWV) form a helical membrane-spanning segment. Over 29–47 (YVRKYQSHQESEVISTITA) the chain is Cytoplasmic. Residues 48–68 (ISSLAIALITSALLPVDIFLV) traverse the membrane as a helical segment. Residues 69 to 98 (SFMKNHNGTFKDWAESNTTRLQIENTVLIG) lie on the Extracellular side of the membrane. N-linked (GlcNAc...) asparagine glycans are attached at residues asparagine 75 and asparagine 85. The helical transmembrane segment at 99-119 (YYTLYSIILFCVFLWIPFVYF) threads the bilayer. Topologically, residues 120-142 (YYEEKDDTDGSQCSQIANAFKYT) are cytoplasmic. The helical transmembrane segment at 143–163 (SGFILVCSCLLLIGAFAPLDI) threads the bilayer. The Extracellular portion of the chain corresponds to 164–186 (HTNKNSTDLDKIKLLFLELGSSN). N-linked (GlcNAc...) asparagine glycosylation occurs at asparagine 168. Residues 187 to 207 (GLAALSFSISSLTLIGMLAAI) form a helical membrane-spanning segment. At 208–303 (TYTAYGMSAL…KCCIVIRPFK (96 aa)) the chain is on the cytoplasmic side. The helical transmembrane segment at 304–324 (IIWGILFILVALLFIVSLFLS) threads the bilayer. Topologically, residues 325–362 (NLDKALHSAGIDSGFIIFGTNLTNPLNMLLPVLQTVFP) are extracellular. A glycan (N-linked (GlcNAc...) asparagine) is linked at asparagine 345. The chain crosses the membrane as a helical span at residues 363 to 383 (LDYIFITIITMYFIFTSMAGI). Residues 384–406 (RNMGIWFFWIRLYKIRRRRTRPQ) are Cytoplasmic-facing. The helical transmembrane segment at 407–427 (ALLFLCMILLLIVLHTSYMIY) threads the bilayer. Residues 428 to 484 (SLAPQYVMYGSQKYLWENNSTQETAIGNSSASVLKDCDASAPEDQCTVTRTYLFLHK) lie on the Extracellular side of the membrane. Asparagine 445, asparagine 446, and asparagine 455 each carry an N-linked (GlcNAc...) asparagine glycan. The helical transmembrane segment at 485–505 (FWFFSSIYYFGNWAFIVVFVI) threads the bilayer. At 506-539 (GLIVSCCKGKKSVIEGEVEDDDSDLSDDEEHPYA) the chain is on the cytoplasmic side.

It belongs to the LIMR family. LMBRD1 subfamily.

Its subcellular location is the endoplasmic reticulum membrane. The protein resides in the lysosome membrane. It is found in the cell membrane. In terms of biological role, lysosomal membrane chaperone required to export cobalamin (vitamin B12) from the lysosome to the cytosol, allowing its conversion to cofactors. Targets ABCD4 transporter from the endoplasmic reticulum to the lysosome. Then forms a complex with lysosomal ABCD4 and cytoplasmic MMACHC to transport cobalamin across the lysosomal membrane. May play a role in mediating and regulating the internalization of the insulin receptor. The sequence is that of Lysosomal cobalamin transport escort protein LMBD1 (lmbrd1) from Xenopus tropicalis (Western clawed frog).